The sequence spans 782 residues: General transcription and DNA repair factor IIH helicase/translocase subunit XPB (782 aa).

The segment covering 1–11 (MGKRDRADRDK) has biased composition (basic and acidic residues). Disordered stretches follow at residues 1–51 (MGKR…ESGT) and 220–240 (ISKTAEGSGGPSTSRVTDPQG). A Nuclear localization signal motif is present at residues 6 to 18 (RADRDKKKSRKRH). The segment covering 21–30 (DEEDDEEDAP) has biased composition (acidic residues). The region spanning 327-488 (MFGNGRARSG…DLNFLIGPKL (162 aa)) is the Helicase ATP-binding domain. 340–347 (LPCGAGKS) contacts ATP. The short motif at 441-444 (DEVH) is the DEVH box element. The region spanning 542-702 (RACQFLIKFH…LAGMEEEDLA (161 aa)) is the Helicase C-terminal domain. Serine 686 is modified (phosphoserine). The residue at position 751 (serine 751) is a Phosphoserine; by CK2.

The protein belongs to the helicase family. RAD25/XPB subfamily. Component of the 7-subunit TFIIH core complex composed of XPB/ERCC3, XPD/ERCC2, GTF2H1, GTF2H2, GTF2H3, GTF2H4 and GTF2H5, which is active in NER. The core complex associates with the 3-subunit CDK-activating kinase (CAK) module composed of CCNH/cyclin H, CDK7 and MNAT1 to form the 10-subunit holoenzyme (holo-TFIIH) active in transcription. Interacts with PUF60. Interacts with ATF7IP. Interacts with KAT2A; leading to KAT2A recruitment to promoters and acetylation of histones. Part of TBP-based Pol II pre-initiation complex (PIC), in which Pol II core assembles with general transcription factors and other specific initiation factors including GTF2E1, GTF2E2, GTF2F1, GTF2F2, TCEA1, ERCC2, ERCC3, GTF2H2, GTF2H3, GTF2H4, GTF2H5, GTF2A1, GTF2A2, GTF2B and TBP; this large multi-subunit PIC complex mediates DNA unwinding and targets Pol II core to the transcription start site where the first phosphodiester bond forms. Post-translationally, phosphorylation on Ser-751 by CK2 controls the 5'-excision activity of ERCC1-XPF endonuclease; phosphorylated protein inhibits the excision activity and thus NER. Dephosphorylation reactivates the 5'-excision step. Phosphorylation has no effect on transcription or the 3'-5' helicase activity.

Its subcellular location is the nucleus. It carries out the reaction Couples ATP hydrolysis with the unwinding of duplex DNA by translocating in the 3'-5' direction.. It catalyses the reaction ATP + H2O = ADP + phosphate + H(+). Phosphorylation on Ser-751 by CK2 controls the 5'-excision activity of ERCC1-XPF endonuclease; phosphorylated protein inhibits the excision activity and thus NER. ATPase activity is stimulated by TFIIH subunit p52 (GTF2H4). DNA translocase activity by this subunit in TFIIH is stimulated by XPA, ERCC5/XPG and XFP plus ERCC1. ATP-dependent 3'-5' DNA helicase/translocase; binds dsDNA rather than ssDNA, unzipping it in a translocase rather than classical helicase activity. Component of the general transcription and DNA repair factor IIH (TFIIH) core complex. When complexed to CDK-activating kinase (CAK), involved in RNA transcription by RNA polymerase II. The ATPase activity of XPB/ERCC3, but not its helicase activity, is required for DNA opening; it may wrap around the damaged DNA wedging it open, causing localized melting and twisting that allows XPD/ERCC2 helicase to anchor. The ATP-dependent helicase activity of XPB/ERCC3 may be required for promoter escape. Also involved in transcription-coupled nucleotide excision repair (NER) of damaged DNA. In NER, TFIIH acts by opening DNA around the lesion to allow the excision of the damaged oligonucleotide and its replacement by a new DNA fragment. The structure of the TFIIH transcription complex differs from the NER-TFIIH complex; large movements by XPD/ERCC2 and XPB/ERCC3 are stabilized by XPA. The polypeptide is General transcription and DNA repair factor IIH helicase/translocase subunit XPB (ERCC3) (Macaca fascicularis (Crab-eating macaque)).